The following is a 231-amino-acid chain: Probable transglycosylase SceD (231 aa).

The N-terminal stretch at 1–27 is a signal peptide; sequence MKKTLLASSLAVGLGIVAGNAGHEAHA. The segment covering 106–116 has biased composition (polar residues); the sequence is AVQANQVQSQE. The segment at 106 to 153 is disordered; the sequence is AVQANQVQSQEVEAPQNAQTQQPQASTSNNSQVTATPTESKSSEGSSV. The segment covering 119 to 137 has biased composition (low complexity); it reads APQNAQTQQPQASTSNNSQ. Positions 138 to 153 are enriched in polar residues; sequence VTATPTESKSSEGSSV.

This sequence belongs to the transglycosylase family. SceD subfamily.

It is found in the secreted. Its function is as follows. Is able to cleave peptidoglycan and affects clumping and separation of bacterial cells. In Staphylococcus aureus (strain USA300), this protein is Probable transglycosylase SceD (sceD).